The sequence spans 237 residues: Ribose-5-phosphate isomerase A (237 aa).

Substrate contacts are provided by residues 33–36 (TGST), 88–91 (DGAD), and 101–104 (KGRG). The Proton acceptor role is filled by E110. Position 128 (K128) interacts with substrate.

It belongs to the ribose 5-phosphate isomerase family. In terms of assembly, homodimer.

The enzyme catalyses aldehydo-D-ribose 5-phosphate = D-ribulose 5-phosphate. It functions in the pathway carbohydrate degradation; pentose phosphate pathway; D-ribose 5-phosphate from D-ribulose 5-phosphate (non-oxidative stage): step 1/1. Its function is as follows. Catalyzes the reversible conversion of ribose-5-phosphate to ribulose 5-phosphate. This Methanoregula boonei (strain DSM 21154 / JCM 14090 / 6A8) protein is Ribose-5-phosphate isomerase A.